The sequence spans 474 residues: Bifunctional protein HldE (474 aa).

The segment at 1-317 is ribokinase; that stretch reads MKLSMPRFDR…RRAVQREQGS (317 aa). 194–197 is an ATP binding site; it reads NLAE. Asp-263 is a catalytic residue. Residues 343–474 form a cytidylyltransferase region; the sequence is FTNGCFDILH…GIVEKIRRQP (132 aa).

It in the N-terminal section; belongs to the carbohydrate kinase PfkB family. In the C-terminal section; belongs to the cytidylyltransferase family. As to quaternary structure, homodimer.

It carries out the reaction D-glycero-beta-D-manno-heptose 7-phosphate + ATP = D-glycero-beta-D-manno-heptose 1,7-bisphosphate + ADP + H(+). The enzyme catalyses D-glycero-beta-D-manno-heptose 1-phosphate + ATP + H(+) = ADP-D-glycero-beta-D-manno-heptose + diphosphate. Its pathway is nucleotide-sugar biosynthesis; ADP-L-glycero-beta-D-manno-heptose biosynthesis; ADP-L-glycero-beta-D-manno-heptose from D-glycero-beta-D-manno-heptose 7-phosphate: step 1/4. It participates in nucleotide-sugar biosynthesis; ADP-L-glycero-beta-D-manno-heptose biosynthesis; ADP-L-glycero-beta-D-manno-heptose from D-glycero-beta-D-manno-heptose 7-phosphate: step 3/4. Its function is as follows. Catalyzes the phosphorylation of D-glycero-D-manno-heptose 7-phosphate at the C-1 position to selectively form D-glycero-beta-D-manno-heptose-1,7-bisphosphate. Functionally, catalyzes the ADP transfer from ATP to D-glycero-beta-D-manno-heptose 1-phosphate, yielding ADP-D-glycero-beta-D-manno-heptose. In Azotobacter vinelandii (strain DJ / ATCC BAA-1303), this protein is Bifunctional protein HldE.